Reading from the N-terminus, the 226-residue chain is Octanoyltransferase (226 aa).

The region spanning proline 31–proline 226 is the BPL/LPL catalytic domain. Residues arginine 70–histidine 77, alanine 159–glycine 161, and glycine 172–alanine 174 contribute to the substrate site. The active-site Acyl-thioester intermediate is the cysteine 190.

This sequence belongs to the LipB family.

The protein resides in the cytoplasm. The catalysed reaction is octanoyl-[ACP] + L-lysyl-[protein] = N(6)-octanoyl-L-lysyl-[protein] + holo-[ACP] + H(+). It functions in the pathway protein modification; protein lipoylation via endogenous pathway; protein N(6)-(lipoyl)lysine from octanoyl-[acyl-carrier-protein]: step 1/2. Functionally, catalyzes the transfer of endogenously produced octanoic acid from octanoyl-acyl-carrier-protein onto the lipoyl domains of lipoate-dependent enzymes. Lipoyl-ACP can also act as a substrate although octanoyl-ACP is likely to be the physiological substrate. The protein is Octanoyltransferase of Variovorax paradoxus (strain S110).